The sequence spans 133 residues: ATP synthase epsilon chain (133 aa).

This sequence belongs to the ATPase epsilon chain family. As to quaternary structure, F-type ATPases have 2 components, CF(1) - the catalytic core - and CF(0) - the membrane proton channel. CF(1) has five subunits: alpha(3), beta(3), gamma(1), delta(1), epsilon(1). CF(0) has three main subunits: a, b and c.

The protein resides in the cell membrane. Its function is as follows. Produces ATP from ADP in the presence of a proton gradient across the membrane. This Clostridium botulinum (strain ATCC 19397 / Type A) protein is ATP synthase epsilon chain.